Reading from the N-terminus, the 499-residue chain is Glutamyl-tRNA(Gln) amidotransferase subunit A (499 aa).

Active-site charge relay system residues include lysine 80 and serine 155. Catalysis depends on serine 179, which acts as the Acyl-ester intermediate.

The protein belongs to the amidase family. GatA subfamily. As to quaternary structure, heterotrimer of A, B and C subunits.

The catalysed reaction is L-glutamyl-tRNA(Gln) + L-glutamine + ATP + H2O = L-glutaminyl-tRNA(Gln) + L-glutamate + ADP + phosphate + H(+). Functionally, allows the formation of correctly charged Gln-tRNA(Gln) through the transamidation of misacylated Glu-tRNA(Gln) in organisms which lack glutaminyl-tRNA synthetase. The reaction takes place in the presence of glutamine and ATP through an activated gamma-phospho-Glu-tRNA(Gln). The polypeptide is Glutamyl-tRNA(Gln) amidotransferase subunit A (Cupriavidus metallidurans (strain ATCC 43123 / DSM 2839 / NBRC 102507 / CH34) (Ralstonia metallidurans)).